A 104-amino-acid chain; its full sequence is Translation initiation factor 1A (104 aa).

Low complexity predominate over residues 1-14; it reads MRGQQAPPQQPTRV. Positions 1–20 are disordered; that stretch reads MRGQQAPPQQPTRVRTPREN. The S1-like domain occupies 12 to 87; that stretch reads TRVRTPRENE…EKCDVIWRYT (76 aa).

This sequence belongs to the eIF-1A family.

Its function is as follows. Seems to be required for maximal rate of protein biosynthesis. Enhances ribosome dissociation into subunits and stabilizes the binding of the initiator Met-tRNA(I) to 40 S ribosomal subunits. The polypeptide is Translation initiation factor 1A (eIF1A) (Methanococcus maripaludis (strain C6 / ATCC BAA-1332)).